A 439-amino-acid polypeptide reads, in one-letter code: Xylose isomerase (439 aa).

Residues histidine 101 and aspartate 104 contribute to the active site. The Mg(2+) site is built by glutamate 232, glutamate 268, histidine 271, aspartate 296, aspartate 307, aspartate 309, and aspartate 339.

Belongs to the xylose isomerase family. In terms of assembly, homotetramer. Requires Mg(2+) as cofactor.

The protein localises to the cytoplasm. It carries out the reaction alpha-D-xylose = alpha-D-xylulofuranose. The protein is Xylose isomerase of Yersinia pseudotuberculosis serotype O:1b (strain IP 31758).